The primary structure comprises 70 residues: MGAIAAGIAMFGAAIGGGIGDGIVVAKMLEGMARQPELSGQLRTTMFIGVGLVEAMPILAFVISLLVMNK.

The next 2 helical transmembrane spans lie at 4-24 (IAAG…DGIV) and 47-67 (FIGV…SLLV).

Belongs to the ATPase C chain family. F-type ATPases have 2 components, F(1) - the catalytic core - and F(0) - the membrane proton channel. F(1) has five subunits: alpha(3), beta(3), gamma(1), delta(1), epsilon(1). F(0) has three main subunits: a(1), b(2) and c(10-14). The alpha and beta chains form an alternating ring which encloses part of the gamma chain. F(1) is attached to F(0) by a central stalk formed by the gamma and epsilon chains, while a peripheral stalk is formed by the delta and b chains.

It localises to the cell membrane. F(1)F(0) ATP synthase produces ATP from ADP in the presence of a proton or sodium gradient. F-type ATPases consist of two structural domains, F(1) containing the extramembraneous catalytic core and F(0) containing the membrane proton channel, linked together by a central stalk and a peripheral stalk. During catalysis, ATP synthesis in the catalytic domain of F(1) is coupled via a rotary mechanism of the central stalk subunits to proton translocation. Its function is as follows. Key component of the F(0) channel; it plays a direct role in translocation across the membrane. A homomeric c-ring of between 10-14 subunits forms the central stalk rotor element with the F(1) delta and epsilon subunits. The chain is ATP synthase subunit c from Pediococcus pentosaceus (strain ATCC 25745 / CCUG 21536 / LMG 10740 / 183-1w).